The chain runs to 50 residues: Large ribosomal subunit protein eL39 (50 aa).

The segment covering 1-12 has biased composition (basic residues); that stretch reads MGKKSKAKKKRL. A disordered region spans residues 1–21; that stretch reads MGKKSKAKKKRLGKLEKQNSR.

Belongs to the eukaryotic ribosomal protein eL39 family.

The sequence is that of Large ribosomal subunit protein eL39 from Haloquadratum walsbyi (strain DSM 16790 / HBSQ001).